The following is a 28-amino-acid chain: Ranatuerin-2LT (28 aa).

Cys-23 and Cys-28 form a disulfide bridge.

As to expression, expressed by the skin glands.

It localises to the secreted. In terms of biological role, has antibacterial activity. The protein is Ranatuerin-2LT of Rana latastei (Italian agile frog).